The sequence spans 688 residues: Methionine--tRNA ligase (688 aa).

Positions 13–23 (PYANGPIHIGH) match the 'HIGH' region motif. Residues cysteine 144, cysteine 147, cysteine 157, and cysteine 160 each coordinate Zn(2+). The 'KMSKS' region signature appears at 334-338 (KMSKS). Lysine 337 lines the ATP pocket. In terms of domain architecture, tRNA-binding spans 582–688 (DFAKIDLRVA…AGAVPGMRVR (107 aa)).

The protein belongs to the class-I aminoacyl-tRNA synthetase family. MetG type 1 subfamily. Homodimer. The cofactor is Zn(2+).

The protein resides in the cytoplasm. It catalyses the reaction tRNA(Met) + L-methionine + ATP = L-methionyl-tRNA(Met) + AMP + diphosphate. In terms of biological role, is required not only for elongation of protein synthesis but also for the initiation of all mRNA translation through initiator tRNA(fMet) aminoacylation. The protein is Methionine--tRNA ligase of Ralstonia nicotianae (strain ATCC BAA-1114 / GMI1000) (Ralstonia solanacearum).